Here is a 25-residue protein sequence, read N- to C-terminus: Endoglucanase 1 (25 aa).

Residues 1–25 (YDASLKPNLQIPQKNIPNNDAVNIK) form a disordered region. Residues 10 to 25 (QIPQKNIPNNDAVNIK) are compositionally biased toward polar residues.

It catalyses the reaction Endohydrolysis of (1-&gt;4)-beta-D-glucosidic linkages in cellulose, lichenin and cereal beta-D-glucans.. Its function is as follows. This enzyme hydrolyzes cellotetraose, cellopentaose, and cellohexaose to cellobiose and cellotriose but does not hydrolyze cellobiose or cellotriose. The sequence is that of Endoglucanase 1 from Ruminiclostridium josui (Clostridium josui).